Here is a 172-residue protein sequence, read N- to C-terminus: Keratin, high-sulfur matrix protein, B2A (172 aa).

The residue at position 2 (A2) is an N-acetylalanine. 5 consecutive repeats follow at residues 27–36, 37–46, 47–56, 57–66, and 67–76; these read PTCCQTSCCQ, PTSIQTSCCQ, PISIQTSCCQ, and PTCLQTSGCE.

The keratin products of mammalian epidermal derivatives such as wool and hair consist of microfibrils embedded in a rigid matrix of other proteins. The matrix proteins include the high-sulfur and high-tyrosine keratins, having molecular weights of 6-20 kDa, whereas the microfibrils contain the larger, low-sulfur keratins (40-56 kDa). This chain is Keratin, high-sulfur matrix protein, B2A, found in Ovis aries (Sheep).